A 335-amino-acid chain; its full sequence is Mesoderm-specific transcript homolog protein (335 aa).

Transmembrane regions (helical) follow at residues 13–33 (WWVQ…HIPP), 88–108 (IWEG…LGFG), and 266–286 (VGAL…LDPV). The region spanning 71–310 (IVVLLHGFPT…PRSTVSILDD (240 aa)) is the AB hydrolase-1 domain. The short motif at 98–103 (RVIALD) is the RVIALD element.

It belongs to the AB hydrolase superfamily. No detectable transcripts during preimplantation development. Isoform 1 was not detected in either in vitro-matured oocytes (IVF) or parthenogenetically activated (PA) blastocyst. Isoform 2 was expressed in IVF and PA blastocysts.

It localises to the endoplasmic reticulum membrane. This Bos taurus (Bovine) protein is Mesoderm-specific transcript homolog protein (MEST).